A 254-amino-acid chain; its full sequence is 4-hydroxy-tetrahydrodipicolinate reductase (254 aa).

NAD(+) is bound by residues 8 to 13 (GCSGKM), D35, 86 to 88 (CST), and 110 to 113 (SANM). Residue H143 is the Proton donor/acceptor of the active site. H144 is a binding site for (S)-2,3,4,5-tetrahydrodipicolinate. The active-site Proton donor is the K147. 153 to 154 (GT) contacts (S)-2,3,4,5-tetrahydrodipicolinate.

The protein belongs to the DapB family.

Its subcellular location is the cytoplasm. It catalyses the reaction (S)-2,3,4,5-tetrahydrodipicolinate + NAD(+) + H2O = (2S,4S)-4-hydroxy-2,3,4,5-tetrahydrodipicolinate + NADH + H(+). The catalysed reaction is (S)-2,3,4,5-tetrahydrodipicolinate + NADP(+) + H2O = (2S,4S)-4-hydroxy-2,3,4,5-tetrahydrodipicolinate + NADPH + H(+). The protein operates within amino-acid biosynthesis; L-lysine biosynthesis via DAP pathway; (S)-tetrahydrodipicolinate from L-aspartate: step 4/4. Its function is as follows. Catalyzes the conversion of 4-hydroxy-tetrahydrodipicolinate (HTPA) to tetrahydrodipicolinate. This chain is 4-hydroxy-tetrahydrodipicolinate reductase, found in Clostridium perfringens (strain SM101 / Type A).